Reading from the N-terminus, the 64-residue chain is Large ribosomal subunit protein bL35 (64 aa).

This sequence belongs to the bacterial ribosomal protein bL35 family.

In Ectopseudomonas mendocina (strain ymp) (Pseudomonas mendocina), this protein is Large ribosomal subunit protein bL35.